A 195-amino-acid polypeptide reads, in one-letter code: MGSVSNQEITEGLPKSLDGTADIHKSDKSVIFQGSGVCKWFNVRMGFGFLTMTKKEGTDLETPLDVFVHQSKLHMEGFRSLKEGESVEFTFKKSSKGLESTQVTGPGGAPCIGSERRPKVKGQQKRRQRGDRCYNCGGLDHHAKECKLPPQPKKCHFCQNPNHMVAQCPEKAMQAANLEDQPITEEQELIPEIME.

Residues 33–106 (QGSGVCKWFN…GLESTQVTGP (74 aa)) form the CSD domain. The segment at 98-127 (LESTQVTGPGGAPCIGSERRPKVKGQQKRR) is disordered. Residues 107 to 130 (GGAPCIGSERRPKVKGQQKRRQRG) are flexible linker. Residues 118–127 (PKVKGQQKRR) show a composition bias toward basic residues. 2 CCHC-type zinc fingers span residues 131–148 (DRCYNCGGLDHHAKECKL) and 153–170 (KKCHFCQNPNHMVAQCPE). Positions 133, 136, 141, 146, 155, 158, 163, and 168 each coordinate Zn(2+).

It belongs to the lin-28 family. Monomer.

It is found in the cytoplasm. The protein localises to the rough endoplasmic reticulum. Its subcellular location is the P-body. It localises to the stress granule. The protein resides in the nucleus. It is found in the nucleolus. Its function is as follows. RNA-binding protein that inhibits processing of pre-let-7 miRNAs and regulates translation of mRNAs that control developmental timing, pluripotency and metabolism. Seems to recognize a common structural G-quartet (G4) feature in its miRNA and mRNA targets. 'Translational enhancer' that drives specific mRNAs to polysomes and increases the efficiency of protein synthesis. Its association with the translational machinery and target mRNAs results in an increased number of initiation events per molecule of mRNA and, indirectly, in mRNA stabilization. Suppressor of microRNA (miRNA) biogenesis, including that of let-7. Binds specific target miRNA precursors (pre-miRNAs), recognizing an 5'-GGAG-3' motif found in their terminal loop, and recruits uridylyltransferase. This results in the terminal uridylation of target pre-miRNAs. Uridylated pre-miRNAs fail to be processed by Dicer and undergo degradation. Localized to the periendoplasmic reticulum area, binds to a large number of spliced mRNAs and inhibits the translation of mRNAs destined for the ER, reducing the synthesis of transmembrane proteins, ER or Golgi lumen proteins, and secretory proteins. Binds to and enhances the translation of mRNAs for several metabolic enzymes, increasing glycolysis and oxidative phosphorylation. Which, with the let-7 repression may enhance tissue repair in adult tissue. The polypeptide is Protein lin-28 homolog A (lin28a) (Xenopus laevis (African clawed frog)).